The sequence spans 102 residues: RNA-binding protein Hfq (102 aa).

The region spanning 9–68 (DPFLNALRRERVPVSIYLVNGIKLQGQIESFDQFVILLKNTVSQMVYKHAISTVVPSRPV) is the Sm domain. Positions 65–102 (SRPVSHHSSNTSVGASVGNYHSGGVSAPAAQQESDGTE) are disordered. Over residues 93-102 (AAQQESDGTE) the composition is skewed to polar residues.

The protein belongs to the Hfq family. In terms of assembly, homohexamer.

Functionally, RNA chaperone that binds small regulatory RNA (sRNAs) and mRNAs to facilitate mRNA translational regulation in response to envelope stress, environmental stress and changes in metabolite concentrations. Also binds with high specificity to tRNAs. The polypeptide is RNA-binding protein Hfq (Photorhabdus laumondii subsp. laumondii (strain DSM 15139 / CIP 105565 / TT01) (Photorhabdus luminescens subsp. laumondii)).